Here is a 603-residue protein sequence, read N- to C-terminus: Polypeptide N-acetylgalactosaminyltransferase 10 (603 aa).

At 1-11 the chain is on the cytoplasmic side; the sequence is MRRKEKRLLQA. The helical; Signal-anchor for type II membrane protein transmembrane segment at 12–31 threads the bilayer; sequence VALALAALVLLPNVGLWALY. At 32–603 the chain is on the lumenal side; it reads RERQPDGSPG…STVLENFNRN (572 aa). N-linked (GlcNAc...) asparagine glycosylation is found at asparagine 124 and asparagine 146. Cystine bridges form between cysteine 135/cysteine 365, cysteine 356/cysteine 432, cysteine 471/cysteine 488, cysteine 523/cysteine 538, and cysteine 563/cysteine 578. The catalytic subdomain A stretch occupies residues 144-253; it reads LPNTSIIIPF…VNWLPPLLDR (110 aa). Substrate is bound by residues aspartate 185 and arginine 214. Aspartate 237 provides a ligand contact to Mn(2+). A substrate-binding site is contributed by serine 238. Mn(2+) is bound at residue histidine 239. The segment at 311 to 373 is catalytic subdomain B; that stretch reads PFESPVMAGG…PCSRVGHIYR (63 aa). Tryptophan 342 provides a ligand contact to substrate. Position 370 (histidine 370) interacts with Mn(2+). Positions 373 and 378 each coordinate substrate. Positions 373-384 are flexible loop; the sequence is RKYVPYKVPAGV. The region spanning 458–590 is the Ricin B-type lectin domain; it reads AAWGEIRNVG…SSLTQQWLFE (133 aa). Asparagine 593 carries N-linked (GlcNAc...) asparagine glycosylation.

This sequence belongs to the glycosyltransferase 2 family. GalNAc-T subfamily. It depends on Mn(2+) as a cofactor. As to expression, highly expressed in the sublingual gland, testis, small intestine, colon and ovary. Expressed at intermediate level in heart, brain, spleen, lung, stomach, cervix and uterus.

The protein localises to the golgi apparatus membrane. It catalyses the reaction L-seryl-[protein] + UDP-N-acetyl-alpha-D-galactosamine = a 3-O-[N-acetyl-alpha-D-galactosaminyl]-L-seryl-[protein] + UDP + H(+). It carries out the reaction L-threonyl-[protein] + UDP-N-acetyl-alpha-D-galactosamine = a 3-O-[N-acetyl-alpha-D-galactosaminyl]-L-threonyl-[protein] + UDP + H(+). The protein operates within protein modification; protein glycosylation. Catalyzes the initial reaction in O-linked oligosaccharide biosynthesis, the transfer of an N-acetyl-D-galactosamine residue to a serine or threonine residue on the protein receptor. Has activity toward Muc5Ac and EA2 peptide substrates. This chain is Polypeptide N-acetylgalactosaminyltransferase 10 (Galnt10), found in Rattus norvegicus (Rat).